A 159-amino-acid chain; its full sequence is 2-C-methyl-D-erythritol 2,4-cyclodiphosphate synthase (159 aa).

A divalent metal cation is bound by residues Asp-8 and His-10. Residues 8–10 (DVH) and 34–35 (HS) each bind 4-CDP-2-C-methyl-D-erythritol 2-phosphate. A divalent metal cation is bound at residue His-42. 4-CDP-2-C-methyl-D-erythritol 2-phosphate is bound by residues 56–58 (DIG), 61–65 (FPDTD), 100–106 (AQAPKML), 132–135 (TTTE), Phe-139, and Arg-142.

This sequence belongs to the IspF family. Homotrimer. Requires a divalent metal cation as cofactor.

It catalyses the reaction 4-CDP-2-C-methyl-D-erythritol 2-phosphate = 2-C-methyl-D-erythritol 2,4-cyclic diphosphate + CMP. It functions in the pathway isoprenoid biosynthesis; isopentenyl diphosphate biosynthesis via DXP pathway; isopentenyl diphosphate from 1-deoxy-D-xylulose 5-phosphate: step 4/6. In terms of biological role, involved in the biosynthesis of isopentenyl diphosphate (IPP) and dimethylallyl diphosphate (DMAPP), two major building blocks of isoprenoid compounds. Catalyzes the conversion of 4-diphosphocytidyl-2-C-methyl-D-erythritol 2-phosphate (CDP-ME2P) to 2-C-methyl-D-erythritol 2,4-cyclodiphosphate (ME-CPP) with a corresponding release of cytidine 5-monophosphate (CMP). This is 2-C-methyl-D-erythritol 2,4-cyclodiphosphate synthase from Escherichia coli O81 (strain ED1a).